Reading from the N-terminus, the 528-residue chain is uncharacterized protein (528 aa).

This is an uncharacterized protein from Giardia intestinalis (Giardia lamblia).